The chain runs to 97 residues: Lipolysis-activating peptide 1-alpha chain (97 aa).

Residues 1-21 (MNITLFCSVFILISLAGLSVS) form the signal peptide. Residues 25–88 (PGNYPMSLYG…FWAAHKNHCK (64 aa)) enclose the LCN-type CS-alpha/beta domain. 3 disulfides stabilise this stretch: cysteine 39–cysteine 62, cysteine 48–cysteine 67, and cysteine 52–cysteine 69.

It belongs to the long (3 C-C) scorpion toxin superfamily. In terms of assembly, monomer (edited version) and heterodimer (non-edited version) of this alpha chain and a beta chain (AC D9U2A2). Expressed by the venom gland.

The protein localises to the secreted. In terms of biological role, the heterodimer non-edited LVP1 induces lipolysis in rat adipocytes. Induction of lipolysis by LVP1 appears to be mediated through the beta-2 adrenergic receptor pathway (ADRB2). The edited BmKBTx-like, similar to beta-toxins, may modulate voltage-gated sodium channels (Nav) and may block voltage-gated potassium channels (Kv). This Lychas mucronatus (Chinese swimming scorpion) protein is Lipolysis-activating peptide 1-alpha chain.